We begin with the raw amino-acid sequence, 954 residues long: MTELLQSLNTQHEFVGRHNGPNHADQQKMLSTINAESLDALIAQTVPAQIRLEKPMQLAEAQSEADMLASIKKFADLNQVKRTFIGQGYYNTFTPNVILRNVLENPGWYTAYTPYQPEISQGRLESLLNYQQMVMDLTGMDIANASLLDEATAAAEAMTLCQRAGKSKSKVFFVADDVHPQTIEVIKTRAKYFGFDVVIGNVDSLPQTEAFGALLQYPSTTGEVRDLTDVITQAQANKTLVSVATDLLASALVKPAGEMGADVVIGSAQRFGVPMGYGGPHAAFMATREQHKRTMPGRVIGVSIDAKGNQALRMAMQTREQHIRREKATSNICTAQALLANMASFFAVYHGEVGIRTIARRTHHMTAILAAGLTKSGYELAHNAFFDTITINTGDNTQALYAKAQAADINLRLLDGQIGISFDETTTVADIDALFAIFDVKESVNALSTDIAGNEFAAIPEACRRTSRFLTHPVFNTHHSETQMMRYLKQLENKDFSLTHGMIPLGSCTMKLNAAAEMIPVTWPEFGALHPFAPIEQAAGYTALAEDLKAKLCEITGYDAFSLQPNSGASGEYAGLIAIQRYHESRGEGHRNVCLIPSSAHGTNPATAAMVSMKVVVVKCDENGNIDLVDLAAKIEKHQENLSSIMITYPSTHGVYEEQVKEVCEMVHAAGGQVYLDGANMNAQVGLTSPGFIGSDVSHLNLHKTFCIPHGGGGPGMGPIGVKSHLAPFLPGHIENGVEGKEFAVSAADLGSASILPISWAYIAMMGADGLTEATKVAILNANYVMERLRPHYPVLYRGTNGRVAHECIIDIRPLKEETGISEEDIAKRLMDYGFHAPTMSFPVAGTLMVEPTESEDLEELDRFCDAMIAIREEMTKVKNGEWPLENNPLVNAPHTQVDLMEEQWDRPYPREIACFPSAATKRSKYWPTVNRVDNVYGDRNLVCSCPGIENYEE.

Position 704 is an N6-(pyridoxal phosphate)lysine (K704).

This sequence belongs to the GcvP family. In terms of assembly, the glycine cleavage system is composed of four proteins: P, T, L and H. Pyridoxal 5'-phosphate is required as a cofactor.

The enzyme catalyses N(6)-[(R)-lipoyl]-L-lysyl-[glycine-cleavage complex H protein] + glycine + H(+) = N(6)-[(R)-S(8)-aminomethyldihydrolipoyl]-L-lysyl-[glycine-cleavage complex H protein] + CO2. The glycine cleavage system catalyzes the degradation of glycine. The P protein binds the alpha-amino group of glycine through its pyridoxal phosphate cofactor; CO(2) is released and the remaining methylamine moiety is then transferred to the lipoamide cofactor of the H protein. The protein is Glycine dehydrogenase (decarboxylating) of Vibrio vulnificus (strain CMCP6).